The primary structure comprises 688 residues: Polyphosphate kinase (688 aa).

ATP is bound at residue asparagine 45. Mg(2+)-binding residues include arginine 375 and arginine 405. In terms of domain architecture, PLD phosphodiesterase spans 430 to 464 (PGLKIHAKLFLISRKENGEVVRYAHIGTGNFNEKT). Catalysis depends on histidine 435, which acts as the Phosphohistidine intermediate. 3 residues coordinate ATP: tyrosine 468, arginine 564, and histidine 592.

It belongs to the polyphosphate kinase 1 (PPK1) family. Mg(2+) is required as a cofactor. In terms of processing, an intermediate of this reaction is the autophosphorylated ppk in which a phosphate is covalently linked to a histidine residue through a N-P bond.

The enzyme catalyses [phosphate](n) + ATP = [phosphate](n+1) + ADP. In terms of biological role, catalyzes the reversible transfer of the terminal phosphate of ATP to form a long-chain polyphosphate (polyP). This chain is Polyphosphate kinase, found in Escherichia coli O157:H7.